A 195-amino-acid polypeptide reads, in one-letter code: Imidazoleglycerol-phosphate dehydratase (195 aa).

The protein belongs to the imidazoleglycerol-phosphate dehydratase family.

The protein resides in the cytoplasm. The enzyme catalyses D-erythro-1-(imidazol-4-yl)glycerol 3-phosphate = 3-(imidazol-4-yl)-2-oxopropyl phosphate + H2O. It functions in the pathway amino-acid biosynthesis; L-histidine biosynthesis; L-histidine from 5-phospho-alpha-D-ribose 1-diphosphate: step 6/9. This Paracoccus denitrificans (strain Pd 1222) protein is Imidazoleglycerol-phosphate dehydratase.